Consider the following 383-residue polypeptide: MASSAPAWVPYEPTRDCSQGLCSMYCPQWCYFIFPPPPPFDVAGTSADDSSGPVFSPLVIAIIGVLASAFLLVSYYTFISKYCGTVSSLRGRVFGSSSGGAAYGGGAGSGGRHGHGQSRSHESWNVSPPSGLDETLINKITVCKYRRGDGFVHTTDCSVCLGEFSDGESLRLLPRCSHAFHQQCIDTWLKSHSNCPLCRANITFVTVGLASPEPEGCAPGETGGDNTHEVVVVMDGLENLCEEQQEAVSRASTADDDHDAKDVAEGMEEANGAAEIREEGSPPKRGASSFDLHRDNRMCIADVLQESMEDELTAARESGLLAGGAGTSRRCHGENSKGRGGRSRRALQLQDAMEALPGKRLPSGGRSCFSSKSGRGKDSDHPM.

A helical transmembrane segment spans residues 53 to 73 (PVFSPLVIAIIGVLASAFLLV). Residues 105–129 (GGAGSGGRHGHGQSRSHESWNVSPP) form a disordered region. Residues 157-199 (CSVCLGEFSDGESLRLLPRCSHAFHQQCIDTWLKSHSNCPLCR) form an RING-type; atypical zinc finger. 2 disordered regions span residues 269-291 (EANG…SSFD) and 320-383 (LLAG…DHPM).

Its subcellular location is the membrane. The catalysed reaction is S-ubiquitinyl-[E2 ubiquitin-conjugating enzyme]-L-cysteine + [acceptor protein]-L-lysine = [E2 ubiquitin-conjugating enzyme]-L-cysteine + N(6)-ubiquitinyl-[acceptor protein]-L-lysine.. The protein operates within protein modification; protein ubiquitination. Functionally, possesses E3 ubiquitin-protein ligase in vitro. The protein is E3 ubiquitin-protein ligase Os04g0590900 of Oryza sativa subsp. japonica (Rice).